A 142-amino-acid polypeptide reads, in one-letter code: MLMPRRVKYRKQQRGRMKGKAKGGTFVQFGEWGLKALEPAWITAQQIEACRIAMLRVMKRSGKIWIRIFPDKPYTKKPPESRMGKGKGNVEGWVAVVKPGKILFEVAGVDEETAHEALRYAASKLPIATKIVPRHHIGGEAV.

The protein belongs to the universal ribosomal protein uL16 family. Part of the 50S ribosomal subunit.

Its function is as follows. Binds 23S rRNA and is also seen to make contacts with the A and possibly P site tRNAs. This is Large ribosomal subunit protein uL16 from Thermotoga maritima (strain ATCC 43589 / DSM 3109 / JCM 10099 / NBRC 100826 / MSB8).